The chain runs to 570 residues: Proline--tRNA ligase (570 aa).

The protein belongs to the class-II aminoacyl-tRNA synthetase family. ProS type 1 subfamily. Homodimer.

Its subcellular location is the cytoplasm. It carries out the reaction tRNA(Pro) + L-proline + ATP = L-prolyl-tRNA(Pro) + AMP + diphosphate. Its function is as follows. Catalyzes the attachment of proline to tRNA(Pro) in a two-step reaction: proline is first activated by ATP to form Pro-AMP and then transferred to the acceptor end of tRNA(Pro). As ProRS can inadvertently accommodate and process non-cognate amino acids such as alanine and cysteine, to avoid such errors it has two additional distinct editing activities against alanine. One activity is designated as 'pretransfer' editing and involves the tRNA(Pro)-independent hydrolysis of activated Ala-AMP. The other activity is designated 'posttransfer' editing and involves deacylation of mischarged Ala-tRNA(Pro). The misacylated Cys-tRNA(Pro) is not edited by ProRS. The polypeptide is Proline--tRNA ligase (Shewanella sp. (strain MR-7)).